Consider the following 335-residue polypeptide: D-alanine--D-alanine ligase (335 aa).

The 206-residue stretch at 124-329 folds into the ATP-grasp domain; that stretch reads KMWFSALGVP…FTHYLYSNIK (206 aa). 154–209 provides a ligand contact to ATP; the sequence is ALENWGSIFIKAASQGSSVGCYRVDSQDELVSSLEQAFSFSPYVIVEKTINARELE. Mg(2+)-binding residues include aspartate 283, glutamate 296, and asparagine 298.

This sequence belongs to the D-alanine--D-alanine ligase family. Requires Mg(2+) as cofactor. Mn(2+) serves as cofactor.

It localises to the cytoplasm. It carries out the reaction 2 D-alanine + ATP = D-alanyl-D-alanine + ADP + phosphate + H(+). It participates in cell wall biogenesis; peptidoglycan biosynthesis. Cell wall formation. In Shewanella woodyi (strain ATCC 51908 / MS32), this protein is D-alanine--D-alanine ligase.